The primary structure comprises 176 residues: Inner membrane-spanning protein YciB (176 aa).

The next 5 helical transmembrane spans lie at 23-43 (MIAATAVALVAGVVQAAFLYW), 50-70 (TMQWVGLVLIVVFGGATIVLG), 74-94 (FIMWKPSVLFWLGALFLWGSH), 119-139 (LTYMWVGFLIFMGIANWFVFT), and 150-170 (MFGSTALMLVFFIIQGIYLST).

The protein belongs to the YciB family.

The protein resides in the cell inner membrane. Functionally, plays a role in cell envelope biogenesis, maintenance of cell envelope integrity and membrane homeostasis. The protein is Inner membrane-spanning protein YciB of Neisseria meningitidis serogroup A / serotype 4A (strain DSM 15465 / Z2491).